The chain runs to 426 residues: Glutamate-1-semialdehyde 2,1-aminomutase (426 aa).

Lysine 265 carries the N6-(pyridoxal phosphate)lysine modification.

The protein belongs to the class-III pyridoxal-phosphate-dependent aminotransferase family. HemL subfamily. Homodimer. The cofactor is pyridoxal 5'-phosphate.

The protein localises to the cytoplasm. The catalysed reaction is (S)-4-amino-5-oxopentanoate = 5-aminolevulinate. It participates in porphyrin-containing compound metabolism; protoporphyrin-IX biosynthesis; 5-aminolevulinate from L-glutamyl-tRNA(Glu): step 2/2. The chain is Glutamate-1-semialdehyde 2,1-aminomutase from Enterobacter sp. (strain 638).